A 373-amino-acid chain; its full sequence is tRNA-specific 2-thiouridylase MnmA (373 aa).

ATP is bound by residues 12–19 (GMSGGVDS) and Met38. An interaction with target base in tRNA region spans residues 98–100 (NPD). Cys103 (nucleophile) is an active-site residue. Cys103 and Cys200 are joined by a disulfide. Gly127 serves as a coordination point for ATP. Residues 150-152 (KDQ) form an interaction with tRNA region. Cys200 acts as the Cysteine persulfide intermediate in catalysis. Residues 312–313 (RY) form an interaction with tRNA region.

Belongs to the MnmA/TRMU family.

The protein localises to the cytoplasm. It catalyses the reaction S-sulfanyl-L-cysteinyl-[protein] + uridine(34) in tRNA + AH2 + ATP = 2-thiouridine(34) in tRNA + L-cysteinyl-[protein] + A + AMP + diphosphate + H(+). In terms of biological role, catalyzes the 2-thiolation of uridine at the wobble position (U34) of tRNA, leading to the formation of s(2)U34. The polypeptide is tRNA-specific 2-thiouridylase MnmA (Streptococcus pneumoniae serotype 19F (strain G54)).